The chain runs to 883 residues: DNA mismatch repair protein MutS (883 aa).

An ATP-binding site is contributed by 602-609 (GPNMSGKS).

It belongs to the DNA mismatch repair MutS family.

This protein is involved in the repair of mismatches in DNA. It is possible that it carries out the mismatch recognition step. This protein has a weak ATPase activity. In Staphylococcus haemolyticus (strain JCSC1435), this protein is DNA mismatch repair protein MutS.